We begin with the raw amino-acid sequence, 373 residues long: Alcohol dehydrogenase class-3 (373 aa).

Residue Ala-1 is modified to N-acetylalanine. Cys-44, His-66, Cys-96, Cys-99, Cys-102, Cys-110, and Cys-173 together coordinate Zn(2+).

Belongs to the zinc-containing alcohol dehydrogenase family. Class-III subfamily. In terms of assembly, homodimer. Zn(2+) serves as cofactor.

It localises to the cytoplasm. It catalyses the reaction a primary alcohol + NAD(+) = an aldehyde + NADH + H(+). It carries out the reaction a secondary alcohol + NAD(+) = a ketone + NADH + H(+). The catalysed reaction is S-(hydroxymethyl)glutathione + NADP(+) = S-formylglutathione + NADPH + H(+). The enzyme catalyses S-(hydroxymethyl)glutathione + NAD(+) = S-formylglutathione + NADH + H(+). It catalyses the reaction S-nitrosoglutathione + NADH + H(+) = S-(hydroxysulfenamide)glutathione + NAD(+). Its function is as follows. Class-III ADH is remarkably ineffective in oxidizing ethanol, but it readily catalyzes the oxidation of long-chain primary alcohols and the oxidation of S-(hydroxymethyl) glutathione. Also acts as a S-nitroso-glutathione reductase by catalyzing the NADH-dependent reduction of S-nitrosoglutathione, thereby regulating protein S-nitrosylation. The chain is Alcohol dehydrogenase class-3 from Saara hardwickii (Indian spiny-tailed lizard).